Reading from the N-terminus, the 108-residue chain is Cytochrome c oxidase subunit 1 (108 aa).

A helical transmembrane segment spans residues 10 to 30; sequence AFVAPVLGLLGFIPGGAGGIV. His49 contacts heme a3. Transmembrane regions (helical) follow at residues 50 to 70 and 85 to 105; these read FHLQVASLVTLTAMGSLYWLL and LGLAVVWLWFLGMMIMAVGLH. His51 is a binding site for Fe(II)-heme a.

This sequence belongs to the heme-copper respiratory oxidase family. Heme serves as cofactor. It depends on Cu cation as a cofactor.

Its subcellular location is the cell membrane. It catalyses the reaction 4 Fe(II)-[cytochrome c] + O2 + 8 H(+)(in) = 4 Fe(III)-[cytochrome c] + 2 H2O + 4 H(+)(out). It participates in energy metabolism; oxidative phosphorylation. The sequence is that of Cytochrome c oxidase subunit 1 (cbaA) from Thermus thermophilus.